Reading from the N-terminus, the 150-residue chain is 1,4-dihydroxy-2-naphthoyl-CoA hydrolase (150 aa).

The active site involves D19.

The protein belongs to the 4-hydroxybenzoyl-CoA thioesterase family. DHNA-CoA hydrolase subfamily.

The catalysed reaction is 1,4-dihydroxy-2-naphthoyl-CoA + H2O = 1,4-dihydroxy-2-naphthoate + CoA + H(+). Its pathway is cofactor biosynthesis; phylloquinone biosynthesis. It participates in quinol/quinone metabolism; 1,4-dihydroxy-2-naphthoate biosynthesis; 1,4-dihydroxy-2-naphthoate from chorismate: step 7/7. Catalyzes the hydrolysis of 1,4-dihydroxy-2-naphthoyl-CoA (DHNA-CoA) to 1,4-dihydroxy-2-naphthoate (DHNA), a reaction involved in phylloquinone (vitamin K1) biosynthesis. The sequence is that of 1,4-dihydroxy-2-naphthoyl-CoA hydrolase from Prochlorococcus marinus (strain MIT 9312).